The sequence spans 391 residues: Oxygen-dependent coproporphyrinogen-III oxidase, chloroplastic (391 aa).

Polar residues predominate over residues 1–13 (MASSLLTTPSQTL). The segment at 1 to 34 (MASSLLTTPSQTLAPNPAAARARRSSPAAAQVSF) is disordered. Residues 14 to 30 (APNPAAARARRSSPAAA) are compositionally biased toward low complexity. Positions 125 to 134 (VLQDGNVFEK) are important for dimerization. Serine 179 lines the substrate pocket. Catalysis depends on histidine 193, which acts as the Proton donor. Substrate is bound by residues 195–197 (NYR) and 349–354 (GGRIES). The important for dimerization stretch occupies residues 331-366 (YVEFNLVYDRGTTFGLKTGGRIESILVSLPLTARWE).

It belongs to the aerobic coproporphyrinogen-III oxidase family. As to quaternary structure, homodimer.

It is found in the plastid. The protein localises to the chloroplast. It catalyses the reaction coproporphyrinogen III + O2 + 2 H(+) = protoporphyrinogen IX + 2 CO2 + 2 H2O. The protein operates within porphyrin-containing compound metabolism; protoporphyrin-IX biosynthesis; protoporphyrinogen-IX from coproporphyrinogen-III (O2 route): step 1/1. Functionally, involved in the heme and chlorophyll biosynthesis. Catalyzes the aerobic oxidative decarboxylation of propionate groups of rings A and B of coproporphyrinogen-III to yield the vinyl groups in protoporphyrinogen-IX. In Hordeum vulgare (Barley), this protein is Oxygen-dependent coproporphyrinogen-III oxidase, chloroplastic (CPX).